Consider the following 486-residue polypeptide: Arginine/agmatine antiporter (486 aa).

The next 12 helical transmembrane spans lie at 12–32, 41–61, 85–105, 129–149, 161–181, 211–231, 242–262, 296–316, 341–361, 367–387, 418–438, and 461–481; these read LGAI…GIFS, AGAG…FFIA, GFGP…QIFG, NTIP…FIVL, IGTI…AFFF, STML…VMSA, ATIL…LLPF, IGLL…VAEI, VSLY…YFST, MLSI…AFLV, IWLI…LLAL, and EVTK…LFST.

This sequence belongs to the amino acid-polyamine-organocation (APC) superfamily. Basic amino acid/polyamine antiporter (APA) (TC 2.A.3.2) family.

Its subcellular location is the cell inner membrane. Its function is as follows. Catalyzes the exchange of L-arginine for agmatine. The arginine uptake by the bacterium in the macrophage may be a virulence factor against the host innate immune response. In Chlamydia felis (strain Fe/C-56) (Chlamydophila felis), this protein is Arginine/agmatine antiporter (aaxC).